We begin with the raw amino-acid sequence, 72 residues long: MMIPWQDLAPETLDSLIESFVLREGTDYGEHERSLEQKVADVKRQLQNGEILLVWSELHETVNIMPRNQFRG.

This sequence belongs to the UPF0270 family.

The protein is UPF0270 protein Ent638_3781 of Enterobacter sp. (strain 638).